A 218-amino-acid polypeptide reads, in one-letter code: GTP cyclohydrolase 1 (218 aa).

Residues Cys109, His112, and Cys180 each coordinate Zn(2+).

Belongs to the GTP cyclohydrolase I family. As to quaternary structure, toroid-shaped homodecamer, composed of two pentamers of five dimers.

The enzyme catalyses GTP + H2O = 7,8-dihydroneopterin 3'-triphosphate + formate + H(+). The protein operates within cofactor biosynthesis; 7,8-dihydroneopterin triphosphate biosynthesis; 7,8-dihydroneopterin triphosphate from GTP: step 1/1. This is GTP cyclohydrolase 1 from Actinobacillus pleuropneumoniae serotype 5b (strain L20).